Reading from the N-terminus, the 351-residue chain is Methionine import ATP-binding protein MetN (351 aa).

The region spanning 4–249 is the ABC transporter domain; that stretch reads VQLDHVSVTF…PKAELTQKFV (246 aa). 41–48 lines the ATP pocket; the sequence is GFSGAGKS.

The protein belongs to the ABC transporter superfamily. Methionine importer (TC 3.A.1.24) family. As to quaternary structure, the complex is composed of two ATP-binding proteins (MetN), two transmembrane proteins (MetI) and a solute-binding protein (MetQ).

Its subcellular location is the cell membrane. It carries out the reaction L-methionine(out) + ATP + H2O = L-methionine(in) + ADP + phosphate + H(+). The enzyme catalyses D-methionine(out) + ATP + H2O = D-methionine(in) + ADP + phosphate + H(+). Part of the ABC transporter complex MetNIQ involved in methionine import. Responsible for energy coupling to the transport system. This chain is Methionine import ATP-binding protein MetN, found in Lactobacillus delbrueckii subsp. bulgaricus (strain ATCC 11842 / DSM 20081 / BCRC 10696 / JCM 1002 / NBRC 13953 / NCIMB 11778 / NCTC 12712 / WDCM 00102 / Lb 14).